We begin with the raw amino-acid sequence, 129 residues long: Succinate dehydrogenase subunit 3-2, mitochondrial (129 aa).

A mitochondrion-targeting transit peptide spans 1–58 (MEKYQSKARFAPLSDAPFALRGALGSSNSSFNNIDHLRQSSSSGQARSYTSSPLGALR). The span at 27–53 (SNSSFNNIDHLRQSSSSGQARSYTSSP) shows a compositional bias: polar residues. The disordered stretch occupies residues 27–66 (SNSSFNNIDHLRQSSSSGQARSYTSSPLGALRPKMFPSGN). Histidine 87 lines the heme pocket. The chain crosses the membrane as a helical span at residues 105–127 (IFGAALGAVIISIPLATKFSLMF).

As to quaternary structure, component of complex II composed of eight subunits in plants: four classical SDH subunits SDH1, SDH2, SDH3 and SDH4 (a flavoprotein (FP), an iron-sulfur protein (IP), and a cytochrome b composed of a large and a small subunit.), as well as four subunits unknown in mitochondria from bacteria and heterotrophic eukaryotes. Heme serves as cofactor.

It is found in the mitochondrion inner membrane. The protein operates within carbohydrate metabolism; tricarboxylic acid cycle. In terms of biological role, membrane-anchoring subunit of succinate dehydrogenase (SDH). This Oryza sativa subsp. japonica (Rice) protein is Succinate dehydrogenase subunit 3-2, mitochondrial.